Here is a 415-residue protein sequence, read N- to C-terminus: MQMSYAIRCAFYQLLLAALMLVAMLQLLYLSLLSGLHGQEEQDQYFEFFPPSPRSVDQVKAQLRTALASGGVLDASGDYRVYRGLLKTTMDPNDVILATHASVDNLLHLSGLLERWEGPLSVSVFAATKEEAQLATVLTYALSSHCPDMRARVAMHLVCPSRYEAAVPDPREPGEFALLRSCQEVFDKLARVAQPGVNYALGTNVSYPNNLLRNLAREGANYALVIDVDMVPSEGLWRSLREMLDQSKQWAGTALVVPAFEIRRARRMPMNKNELLQLYQVGEVRPFYYGLCTPCQAPTNYSRWVNLPEETLLRPAYVVPWQDPWEPFYVAGGKVPTFDERFRQYGFNRISQACELHVAGFDFEVLNEGFLVHKGFKEVLKFHPQKEAENQHNKILYRQFKQELKAKYPDSPRHC.

The Cytoplasmic portion of the chain corresponds to 1–8 (MQMSYAIR). A helical; Signal-anchor for type II membrane protein membrane pass occupies residues 9 to 36 (CAFYQLLLAALMLVAMLQLLYLSLLSGL). Topologically, residues 37-415 (HGQEEQDQYF…AKYPDSPRHC (379 aa)) are lumenal. Residue Asn-204 is glycosylated (N-linked (GlcNAc...) asparagine). Residues Asp-227 and Asp-229 each coordinate Mn(2+). N-linked (GlcNAc...) asparagine glycosylation is present at Asn-300.

The protein belongs to the glycosyltransferase 49 family. Interacts with LARGE1 and LARGE2. Requires Mn(2+) as cofactor.

Its subcellular location is the golgi apparatus membrane. It catalyses the reaction 3-O-[beta-D-Xyl-(1-&gt;4)-Rib-ol-P-Rib-ol-P-3-beta-D-GalNAc-(1-&gt;3)-beta-D-GlcNAc-(1-&gt;4)-(O-6-P-alpha-D-Man)]-Thr-[protein] + UDP-alpha-D-glucuronate = 3-O-[beta-D-GlcA-(1-&gt;3)-beta-D-Xyl-(1-&gt;4)-Rib-ol-P-Rib-ol-P-3-beta-D-GalNAc-(1-&gt;3)-beta-D-GlcNAc-(1-&gt;4)-(O-6-P-alpha-D-Man)]-Thr-[protein] + UDP + H(+). It participates in protein modification; protein glycosylation. Its function is as follows. Beta-1,4-glucuronyltransferase involved in O-mannosylation of alpha-dystroglycan (DAG1). Transfers a glucuronic acid (GlcA) residue onto a xylose (Xyl) acceptor to produce the glucuronyl-beta-1,4-xylose-beta disaccharide primer, which is further elongated by LARGE1, during synthesis of phosphorylated O-mannosyl glycan. Phosphorylated O-mannosyl glycan is a carbohydrate structure present in alpha-dystroglycan (DAG1), which is required for binding laminin G-like domain-containing extracellular proteins with high affinity. Required for axon guidance; via its function in O-mannosylation of alpha-dystroglycan (DAG1). The chain is Beta-1,4-glucuronyltransferase 1 from Bos taurus (Bovine).